The following is a 380-amino-acid chain: Cytochrome b (380 aa).

Transmembrane regions (helical) follow at residues 33–53 (FGSL…FLAM), 77–98 (WLIR…YLHI), 113–133 (WNIG…GYVL), and 178–198 (FFAF…LHFF). Residues His83 and His97 each coordinate heme b. 2 residues coordinate heme b: His182 and His196. Position 201 (His201) interacts with a ubiquinone. Transmembrane regions (helical) follow at residues 226–246 (YKDL…SFFS), 288–308 (LGGV…PILH), 320–340 (LTQL…WIGG), and 347–367 (FIAV…ILIP).

The protein belongs to the cytochrome b family. In terms of assembly, the cytochrome bc1 complex contains 3 respiratory subunits (MT-CYB, CYC1 and UQCRFS1), 2 core proteins (UQCRC1 and UQCRC2) and probably 6 low-molecular weight proteins. The cofactor is heme b.

It localises to the mitochondrion inner membrane. Functionally, component of the ubiquinol-cytochrome c reductase complex (complex III or cytochrome b-c1 complex) that is part of the mitochondrial respiratory chain. The b-c1 complex mediates electron transfer from ubiquinol to cytochrome c. Contributes to the generation of a proton gradient across the mitochondrial membrane that is then used for ATP synthesis. The polypeptide is Cytochrome b (mt-cyb) (Zenopsis nebulosa (Mirror dory)).